Reading from the N-terminus, the 500-residue chain is Probable malate:quinone oxidoreductase (500 aa).

It belongs to the MQO family. FAD serves as cofactor.

The catalysed reaction is (S)-malate + a quinone = a quinol + oxaloacetate. It participates in carbohydrate metabolism; tricarboxylic acid cycle; oxaloacetate from (S)-malate (quinone route): step 1/1. The chain is Probable malate:quinone oxidoreductase from Bordetella avium (strain 197N).